The primary structure comprises 251 residues: Pyruvate formate-lyase-activating enzyme (251 aa).

The Radical SAM core domain occupies Val-15 to Lys-244. Residues Cys-29, Cys-33, and Cys-36 each contribute to the [4Fe-4S] cluster site. S-adenosyl-L-methionine contacts are provided by residues Tyr-35–His-37, Gly-79, Asp-134–Lys-136, and His-207.

This sequence belongs to the organic radical-activating enzymes family. It depends on [4Fe-4S] cluster as a cofactor.

Its subcellular location is the cytoplasm. The catalysed reaction is glycyl-[formate C-acetyltransferase] + reduced [flavodoxin] + S-adenosyl-L-methionine = glycin-2-yl radical-[formate C-acetyltransferase] + semiquinone [flavodoxin] + 5'-deoxyadenosine + L-methionine + H(+). In terms of biological role, activation of pyruvate formate-lyase under anaerobic conditions by generation of an organic free radical, using S-adenosylmethionine and reduced flavodoxin as cosubstrates to produce 5'-deoxy-adenosine. This chain is Pyruvate formate-lyase-activating enzyme (pflA), found in Staphylococcus aureus (strain N315).